Reading from the N-terminus, the 214-residue chain is Cytochrome c biogenesis ATP-binding export protein CcmA (214 aa).

In terms of domain architecture, ABC transporter spans Leu16–Ala212. An ATP-binding site is contributed by Gly48–Thr55.

It belongs to the ABC transporter superfamily. CcmA exporter (TC 3.A.1.107) family. As to quaternary structure, the complex is composed of two ATP-binding proteins (CcmA) and two transmembrane proteins (CcmB).

It is found in the cell inner membrane. It carries out the reaction heme b(in) + ATP + H2O = heme b(out) + ADP + phosphate + H(+). Part of the ABC transporter complex CcmAB involved in the biogenesis of c-type cytochromes; once thought to export heme, this seems not to be the case, but its exact role is uncertain. Responsible for energy coupling to the transport system. This Maricaulis maris (strain MCS10) (Caulobacter maris) protein is Cytochrome c biogenesis ATP-binding export protein CcmA.